A 319-amino-acid polypeptide reads, in one-letter code: Lambda-crystallin homolog (319 aa).

An N-acetylalanine modification is found at alanine 2. A Phosphoserine modification is found at serine 3. NAD(+)-binding positions include 16-17 (LI), aspartate 36, glutamate 97, and lysine 102.

Belongs to the 3-hydroxyacyl-CoA dehydrogenase family. Homodimer.

Its subcellular location is the cytoplasm. It catalyses the reaction L-gulonate + NAD(+) = 3-dehydro-L-gulonate + NADH + H(+). Its activity is regulated as follows. Inhibited by malonate. In terms of biological role, has high L-gulonate 3-dehydrogenase activity. It also exhibits low dehydrogenase activity toward L-3-hydroxybutyrate (HBA) and L-threonate. This Rattus norvegicus (Rat) protein is Lambda-crystallin homolog (Cryl1).